Consider the following 248-residue polypeptide: Kallikrein-12 (248 aa).

Positions 1–17 are cleaved as a signal peptide; sequence MGLSIFLLLCVLGLSQA. One can recognise a Peptidase S1 domain in the interval 22 to 246; that stretch reads IFNGTECGRN…YVDWIRMIMR (225 aa). A glycan (N-linked (GlcNAc...) asparagine) is linked at Asn24. Disulfide bonds link Cys28/Cys161, Cys47/Cys63, Cys133/Cys235, Cys140/Cys206, Cys172/Cys186, and Cys196/Cys222. Residues His62 and Asp108 each act as charge relay system in the active site. N-linked (GlcNAc...) asparagine glycosylation is present at Asn163. Ser200 functions as the Charge relay system in the catalytic mechanism.

This sequence belongs to the peptidase S1 family. Kallikrein subfamily.

The protein localises to the secreted. In Homo sapiens (Human), this protein is Kallikrein-12 (KLK12).